Consider the following 443-residue polypeptide: Diels-Alderase poxQ (443 aa).

The N-terminal stretch at 1 to 23 is a signal peptide; sequence MARIPLEFLSITLPVLLLAYCLA. N-linked (GlcNAc...) asparagine glycosylation is found at asparagine 78, asparagine 97, and asparagine 145.

It belongs to the Diels-Alderase family.

It participates in secondary metabolite biosynthesis. Its function is as follows. Diels-Alderase; part of the gene cluster that mediates the biosynthesis of oxaleimides, cytotoxic compounds containing an unusual disubstituted succinimide moiety. The first step of the pathway is provided by the HR-PKS poxF that serves in a new mode of collaborative biosynthesis with the PKS-NRPS poxE, by providing the olefin containing amino acid substrate via the synthesis of an ACP-bound dec-4-enoate. The cytochrome P450 monooxygenase poxM-catalyzed oxidation at the alpha-position creates the enzyme-bound 2-hydroxydec-4-enoyl-ACP thioester, which may be prone to spontaneous hydrolysis to yield 2-hydroxydec-4-enoic acid due to increased electrophilicity of the carbonyl. 2-hydroxydec-4-enoic acid can then be further oxidized by poxM to yield the alpha-ketoacid 2-oxodec-4-enoicacid, which is reductively aminated by the aminotransferase poxL to yield (S,E)-2-aminodec-4-enoic acid. The Hybrid PKS-NRPS synthetase poxE then performs condensation between the octaketide product of its PKS modules and the amino group of (S,E)-2-aminodec-4-enoic acid which is activated and incorporated by the adenylation domain. The resulting aminoacyl product can be cyclized by the Diels-Alderase PoxQ and reductively released by the reductive (R) domain of poxE to yield an aldehyde intermediate. The released aldehyde is then substrate for a Knoevenagel condensation by the hydrolyase poxO followed by an oxidation at the 5-position of the pyrrolidone ring. The presence of the olefin from the amino acid building block allows for migration of the substituted allyl group to occur. This allylic transposition reaction takes place in a conjugate addition, semipinacol-like fashion to yield a succinimide intermediate. Iterative two-electron oxidations of the C7 methyl of the succinimide intermediate to the carboxylic acid can be catalyzed by one of two remaining cytochrome P450 monooxygenasess poxC or poxD to yield oxaleimide A. Subsequent oxidation yields the maleimide scaffold oxaleimide I. Both oxaleimide A and oxaleimide I can undergo oxidative modifications in the decalin ring to yield the series of products oxaleimides B to H. This chain is Diels-Alderase poxQ, found in Penicillium oxalicum (strain 114-2 / CGMCC 5302) (Penicillium decumbens).